The chain runs to 1141 residues: LRR receptor-like serine/threonine-protein kinase RGI1 (1141 aa).

Positions 1 to 33 (MSLHSLIFFSSSSSSLLFSFFFIFIFCFSLSDA) are cleaved as a signal peptide. At 34-726 (EQNPEASILY…DASRTRKLRL (693 aa)) the chain is on the extracellular side. Cys-69 and Cys-77 are joined by a disulfide. N-linked (GlcNAc...) asparagine glycosylation is present at Asn-71. LRR repeat units lie at residues 80 to 104 (QGFITDIDIESVPLQLSLPKNLPAF), 105 to 128 (RSLQKLTISGANLTGTLPESLGDC), 130 to 152 (GLKVLDLSSNGLVGDIPWSLSKL), 153 to 176 (RNLETLILNSNQLTGKIPPDISKC), 178 to 200 (KLKSLILFDNLLTGSIPTELGKL), 202 to 225 (GLEVIRIGGNKEISGQIPSEIGDC), 226 to 249 (SNLTVLGLAETSVSGNLPSSLGKL), 250 to 273 (KKLETLSIYTTMISGEIPSDLGNC), 275 to 297 (ELVDLFLYENSLSGSIPREIGQL), 298 to 321 (TKLEQLFLWQNSLVGGIPEEIGNC), 322 to 345 (SNLKMIDLSLNLLSGSIPSSIGRL), 347 to 369 (FLEEFMISDNKFSGSIPTTISNC), 370 to 392 (SSLVQLQLDKNQISGLIPSELGT), 394 to 417 (TKLTLFFAWSNQLEGSIPPGLADC), 418 to 441 (TDLQALDLSRNSLTGTIPSGLFML), 443 to 464 (NLTKLLLISNSLSGFIPQEIGN), 465 to 489 (CSSLVRLRLGFNRITGEIPSGIGSL), 490 to 513 (KKINFLDFSSNRLHGKVPDEIGSC), 514 to 537 (SELQMIDLSNNSLEGSLPNPVSSL), 538 to 561 (SGLQVLDVSANQFSGKIPASLGRL), 563 to 585 (SLNKLILSKNLFSGSIPTSLGMC), 586 to 609 (SGLQLLDLGSNELSGEIPSELGDI), 610 to 634 (ENLEIALNLSSNRLTGKIPSKIASL), 636 to 657 (KLSILDLSHNMLEGDLAPLANI), and 658 to 682 (ENLVSLNISYNSFSGYLPDNKLFRQ). Asn-116 is a glycosylation site (N-linked (GlcNAc...) asparagine). 2 short sequence motifs (small peptide recognition) span residues 185–186 (FD) and 207–210 (RIGG). Asn-227 carries an N-linked (GlcNAc...) asparagine glycan. Short sequence motifs (small peptide recognition) lie at residues 230-235 (VLGLAE) and Tyr-258. N-linked (GlcNAc...) asparagine glycosylation occurs at Asn-272. The short motif at 280–282 (FLY) is the Small peptide recognition element. Residue Asn-320 is glycosylated (N-linked (GlcNAc...) asparagine). 2 consecutive short sequence motifs (small peptide recognition) follow at residues 328-331 (DLSL) and 350-352 (EFM). N-linked (GlcNAc...) asparagine glycosylation is present at Asn-368. 2 consecutive short sequence motifs (small peptide recognition) follow at residues 398–402 (LFFAW) and 424–427 (DLSR). Asn-443 is a glycosylation site (N-linked (GlcNAc...) asparagine). The Small peptide recognition motif lies at 446-450 (KLLLI). A glycan (N-linked (GlcNAc...) asparagine) is linked at Asn-464. The short motif at 470 to 472 (RLR) is the Small peptide recognition element. A glycan (N-linked (GlcNAc...) asparagine) is linked at Asn-523. A glycan (N-linked (GlcNAc...) asparagine) is linked at Asn-617. Asn-664 carries N-linked (GlcNAc...) asparagine glycosylation. Residues 727 to 747 (TLALLITLTVVLMILGAVAVI) form a helical membrane-spanning segment. Over 748–1141 (RARRNIDNER…LLYSSSSSIE (394 aa)) the chain is Cytoplasmic. Positions 786 to 1074 (LVEPNVIGKG…EIKQEREEYA (289 aa)) constitute a Protein kinase domain. ATP is bound by residues 792-800 (IGKGCSGVV) and Lys-814. Residues Tyr-868 and Tyr-906 each carry the phosphotyrosine modification. Catalysis depends on Asp-919, which acts as the Proton acceptor. Phosphotyrosine occurs at positions 962 and 969.

The protein belongs to the protein kinase superfamily. Ser/Thr protein kinase family. As to quaternary structure, interacts with beet curly top virus AL4/C4. Binds to RGF peptides such as RGF1, GLV5/CLEL1/RGF2, GLV7/CLEL3/RGF3, GLV3/RGF4, GLV10/CLEL7/RGF5 and RGF10/CLELN; these interactions trigger the formation of heterodimers with SERK1, SERK2 or BAK1/SERK3 via LRR regions. Interacts with UBP13. Post-translationally, phosphorylated and ubiquitinated upon interaction with RGF1, thus leading to activation a subsequent degradation. Stabilized by UBP12 and UBP13-mediated deubiquitination. In terms of processing, autophosphorylated. In terms of tissue distribution, expressed in roots.

The protein localises to the cell membrane. It catalyses the reaction L-seryl-[protein] + ATP = O-phospho-L-seryl-[protein] + ADP + H(+). The enzyme catalyses L-threonyl-[protein] + ATP = O-phospho-L-threonyl-[protein] + ADP + H(+). Functionally, together with RGI2, RGI3, RGI4 and RGI5, acts as a receptor of RGF peptides (e.g. RGF1, GLV5/CLEL1/RGF2, GLV7/CLEL3/RGF3, GLV3/RGF4, GLV10/CLEL7/RGF5 and RGF10/CLELN), peptide hormones which maintain the postembryonic root stem cell niche by regulating the expression levels and patterns of the transcription factor PLETHORA (PLT, e.g. PLT1 and PLT2). Links RGF peptides signal with their downstream components. This Arabidopsis thaliana (Mouse-ear cress) protein is LRR receptor-like serine/threonine-protein kinase RGI1.